A 1461-amino-acid chain; its full sequence is Regulation of nuclear pre-mRNA domain-containing protein 2 (1461 aa).

N-acetylalanine is present on A2. Position 16 is a phosphoserine (S16). A CID domain is found at 19 to 149 (SAGALESSLD…ALREALSTTF (131 aa)). Disordered stretches follow at residues 311-438 (STLP…TSLS) and 469-504 (NTGVSPASRPSPGTPTSPSNLTSGLKTPAPATTTSH). Residues 352 to 368 (ESEKSATPEPVTDNRDV) are compositionally biased toward basic and acidic residues. Position 356 is a phosphoserine (S356). Phosphothreonine is present on T358. Residues 369–378 (EDMELSDVED) are compositionally biased toward acidic residues. Residue S374 is modified to Phosphoserine. The span at 379 to 394 (DGSKIIVEDRKEKPAE) shows a compositional bias: basic and acidic residues. The span at 397-416 (AVSTSVPTKPTENISKASSC) shows a compositional bias: polar residues. Composition is skewed to low complexity over residues 417-426 (TPVPVTMTAT) and 473-491 (SPASRPSPGTPTSPSNLTS). Phosphoserine occurs at positions 473, 476, and 479. T482 is modified (phosphothreonine). At S485 the chain carries Phosphoserine. T517 is subject to Phosphothreonine. Residues 547-623 (TGNPVPASEA…SPGLPSTTFK (77 aa)) are disordered. Residues 553 to 566 (ASEAASQSTSASPA) show a composition bias toward low complexity. A Phosphoserine modification is found at S564. Polar residues predominate over residues 567 to 583 (NTTVSTIKGRNLPSSAQ). Phosphoserine is present on S593. Residues 593 to 614 (SPNSSTSEVSSTSASKASIGQS) are compositionally biased toward low complexity. The residue at position 598 (T598) is a Phosphothreonine. S614, S663, S665, and S716 each carry phosphoserine. 5 disordered regions span residues 696–849 (GSSA…MMNL), 900–997 (SENC…EKVL), 1016–1102 (ASRK…SGEP), 1132–1312 (STSG…APPL), and 1340–1461 (FGVL…PPRY). The residue at position 723 (T723) is a Phosphothreonine. Position 730 is a phosphoserine (S730). Position 732 is a phosphothreonine (T732). A compositionally biased stretch (polar residues) spans 742 to 752 (PTSSSVDTMSL). S758 and S762 each carry phosphoserine. The segment covering 758–768 (SPGSSTPSSTR) has biased composition (low complexity). T763 carries the phosphothreonine modification. 8 positions are modified to phosphoserine: S769, S817, S826, S900, S909, S928, S965, and S976. A compositionally biased stretch (polar residues) spans 927-954 (RSPSPSKNDSFFTPDSNHNSLSQSTTGH). Residues 1031 to 1055 (SKGTPSDGVSLSNLTQPSLTATDQQ) show a composition bias toward polar residues. A phosphoserine mark is found at S1068 and S1099. Positions 1141-1150 (GPSSASELAS) are enriched in low complexity. Gly residues predominate over residues 1151-1160 (LGGGGSGGLT). The segment covering 1174–1189 (FQESVGSFRSNSFNST) has biased composition (polar residues). Pro residues-rich tracts occupy residues 1267-1277 (FPTPPPPPPPG) and 1290-1299 (STPPPPPPPV). The residue at position 1366 (R1366) is an Asymmetric dimethylarginine. The segment covering 1382–1391 (PHGGGGGGGS) has biased composition (gly residues). Over residues 1417–1434 (PRPDFRPREPFLSRDPFH) the composition is skewed to basic and acidic residues. Asymmetric dimethylarginine is present on residues R1424 and R1430.

Associates with the RNA polymerase II complex.

The polypeptide is Regulation of nuclear pre-mRNA domain-containing protein 2 (RPRD2) (Homo sapiens (Human)).